Consider the following 35-residue polypeptide: Peptide Hact-3 (35 aa).

Expressed in tentacles.

It is found in the nematocyst. The protein resides in the secreted. Functionally, peptide with unknown function. Does not exhibit antimicrobial activity against Escherichia coli and Staphylococcus aureus. This Heliofungia actiniformis (Mushroom coral) protein is Peptide Hact-3.